A 153-amino-acid chain; its full sequence is Protein-export protein SecB (153 aa).

The protein belongs to the SecB family. Homotetramer, a dimer of dimers. One homotetramer interacts with 1 SecA dimer.

Its subcellular location is the cytoplasm. Its function is as follows. One of the proteins required for the normal export of preproteins out of the cell cytoplasm. It is a molecular chaperone that binds to a subset of precursor proteins, maintaining them in a translocation-competent state. It also specifically binds to its receptor SecA. The sequence is that of Protein-export protein SecB from Edwardsiella ictaluri (strain 93-146).